The primary structure comprises 223 residues: Putative NAD(P)H nitroreductase SAUSA300_2462 (223 aa).

Belongs to the nitroreductase family. It depends on FMN as a cofactor.

The sequence is that of Putative NAD(P)H nitroreductase SAUSA300_2462 from Staphylococcus aureus (strain USA300).